A 400-amino-acid chain; its full sequence is Endoplasmin (400 aa).

The residue at position 1 (Lys-1) is an N6-succinyllysine. Asn-42 is a glycosylation site (N-linked (GlcNAc...) asparagine). The residue at position 44 (Ser-44) is a Phosphoserine. At Lys-76 the chain carries N6-acetyllysine. N-linked (GlcNAc...) asparagine glycosylation is found at Asn-78 and Asn-99. Lys-230 is subject to N6-succinyllysine. Residues 346 to 400 (IDPEAQVEEEPEEEPEDTTEDTEQDEEEEVDAGTEEEEEEEQETAKESTAEKDEL) form a disordered region. The segment covering 350-387 (AQVEEEPEEEPEDTTEDTEQDEEEEVDAGTEEEEEEEQ) has biased composition (acidic residues). Residue Thr-379 is modified to Phosphothreonine. Positions 388-400 (ETAKESTAEKDEL) are enriched in basic and acidic residues. The Prevents secretion from ER motif lies at 397–400 (KDEL).

It belongs to the heat shock protein 90 family. As to quaternary structure, homodimer; disulfide-linked. Component of an EIF2 complex at least composed of CELF1/CUGBP1, CALR, CALR3, EIF2S1, EIF2S2, HSP90B1 and HSPA5. Part of a large chaperone multiprotein complex comprising DNAJB11, HSP90B1, HSPA5, HYOU, PDIA2, PDIA4, PDIA6, PPIB, SDF2L1, UGGT1 and very small amounts of ERP29, but not, or at very low levels, CALR nor CANX. Interacts with AIMP1; regulates its retention in the endoplasmic reticulum. Hyperglycosylated form interacts with OS9; promoting its degradation by the endoplasmic reticulum associated degradation (ERAD). Interacts with CNPY3. This interaction is disrupted in the presence of ATP. Interacts with TLR4 and TLR9, but not with TLR3. Interacts with MZB1 in a calcium-dependent manner. Interacts with METTL23. Interacts with IL1B; the interaction facilitates cargo translocation into the ERGIC. Interacts with EIF2AK3. Phosphorylated by CK2. Post-translationally, N-glycosylated cotranslationally at Asn-217 by STT3A-containing OST-A complex: this glycosylation is constitutive. In response to various stress, 5 additional facultative sites (Asn-62, Asn-107, Asn-445, Asn-481 and Asn-502) can be glycosylated post-translationally by STT3B-containing OST-B complex, leading to a hyperglycosylated form that is degraded by the ER-associated degradation (ERAD) pathway. In normal conditions, the OST-A complex together with CCDC134 prevent glycosylation at facultative sites during protein folding, thereby preventing hyperglycosylation. Mechanistically, nascent HSP90B1 is tethered during translation to a specialized CCDC134-containing translocon that forms a microenvironment for its folding, in which STT3A associates with the SRT pseudosubstrate motif, and prevents access to facultative glycosylation sites until folding is completed, rendering its facultative sites inaccessible to the OST-B complex.

Its subcellular location is the endoplasmic reticulum lumen. The protein localises to the sarcoplasmic reticulum lumen. It is found in the melanosome. The enzyme catalyses ATP + H2O = ADP + phosphate + H(+). In terms of biological role, ATP-dependent chaperone involved in the processing of proteins in the endoplasmic reticulum, regulating their transport. Together with MESD, acts as a modulator of the Wnt pathway by promoting the folding of LRP6, a coreceptor of the canonical Wnt pathway. When associated with CNPY3, required for proper folding of Toll-like receptors. Promotes folding and trafficking of TLR4 to the cell surface. May participate in the unfolding of cytosolic leaderless cargos (lacking the secretion signal sequence) such as the interleukin 1/IL-1 to facilitate their translocation into the ERGIC (endoplasmic reticulum-Golgi intermediate compartment) and secretion; the translocation process is mediated by the cargo receptor TMED10. In Mesocricetus auratus (Golden hamster), this protein is Endoplasmin (HSP90B1).